Consider the following 1401-residue polypeptide: Lysine-specific demethylase 6A (1401 aa).

An interaction with SUPT6H region spans residues 1–1095; that stretch reads MKSCGVSLAT…TNIDLSDDKK (1095 aa). TPR repeat units lie at residues 93–126, 130–163, 170–199, 205–238, 250–283, 284–317, 318–351, and 352–385; these read SDFF…QSDY, AAFL…DPSF, HLRL…DCNP, AEIQ…ENLS, GWMH…DPNS, GQSW…SEAS, ADTW…DHGH, and AAAW…KSCS. Residues 437–449 are compositionally biased toward polar residues; it reads AMNTAQQNTSDNW. The disordered stretch occupies residues 437–457; the sequence is AMNTAQQNTSDNWSGGHAVSH. R519 is subject to Omega-N-methylarginine. The interval 521-541 is disordered; sequence TGIPNGPTADSSLPTNSVSGQ. R549 carries the post-translational modification Omega-N-methylarginine. Polar residues-rich tracts occupy residues 624-652 and 660-724; these read LTSS…SHSA and LSST…SGNI. Disordered regions lie at residues 624–746, 758–778, 810–864, 914–940, and 1043–1079; these read LTSS…SVEG, AVCS…SDNP, KTDN…ESQS, LLDK…NPPT, and FQES…KGPF. Position 769 is a phosphoserine (S769). Positions 814-833 are enriched in low complexity; sequence SVASSPSSAISTATPSPKST. Residue T827 is modified to Phosphothreonine. S829 bears the Phosphoserine mark. Positions 834-848 are enriched in polar residues; it reads EQTTTNSVTSLNSPH. Over residues 918–931 the composition is skewed to pro residues; the sequence is CPPPRPPSSPYPPL. Basic and acidic residues predominate over residues 1046-1063; it reads SLREENEKRSHHKDHSDS. Residues 1095 to 1258 form the JmjC domain; that stretch reads KWKLQLHELT…YKLAVERYEW (164 aa). Residues H1146, E1148, and H1226 each coordinate Fe cation. The Zn(2+) site is built by C1331, C1334, C1358, and C1361.

The protein belongs to the UTX family. As to quaternary structure, interacts with TLE1. Component of the MLL2/3 complex (also named ASCOM complex), at least composed of KMT2D/MLL2 or KMT2C/MLL3, ASH2L, RBBP5, WDR5, NCOA6, DPY30, KDM6A (or KDM6B), PAXIP1/PTIP, PAGR1 and alpha- and beta-tubulin. Interacts with SUPT6H. Interacts with SMARCA4. Interacts with PROSER1. The cofactor is L-ascorbate. Fe(2+) is required as a cofactor.

It localises to the nucleus. The catalysed reaction is N(6),N(6),N(6)-trimethyl-L-lysyl(27)-[histone H3] + 2 2-oxoglutarate + 2 O2 = N(6)-methyl-L-lysyl(27)-[histone H3] + 2 formaldehyde + 2 succinate + 2 CO2. Histone demethylase that specifically demethylates 'Lys-27' of histone H3, thereby playing a central role in histone code. Demethylates trimethylated and dimethylated but not monomethylated H3 'Lys-27'. Plays a central role in regulation of posterior development, by regulating HOX gene expression. Demethylation of 'Lys-27' of histone H3 is concomitant with methylation of 'Lys-4' of histone H3, and regulates the recruitment of the PRC1 complex and monoubiquitination of histone H2A. Plays a demethylase-independent role in chromatin remodeling to regulate T-box family member-dependent gene expression. The polypeptide is Lysine-specific demethylase 6A (KDM6A) (Homo sapiens (Human)).